Here is a 292-residue protein sequence, read N- to C-terminus: NAD kinase (292 aa).

Asp-73 functions as the Proton acceptor in the catalytic mechanism. Residues 73–74, 147–148, His-158, Arg-175, Asp-177, 188–193, and Gln-247 contribute to the NAD(+) site; these read DG, NE, and TAYSLS.

This sequence belongs to the NAD kinase family. It depends on a divalent metal cation as a cofactor.

It is found in the cytoplasm. The enzyme catalyses NAD(+) + ATP = ADP + NADP(+) + H(+). In terms of biological role, involved in the regulation of the intracellular balance of NAD and NADP, and is a key enzyme in the biosynthesis of NADP. Catalyzes specifically the phosphorylation on 2'-hydroxyl of the adenosine moiety of NAD to yield NADP. This is NAD kinase from Shigella boydii serotype 18 (strain CDC 3083-94 / BS512).